The primary structure comprises 429 residues: Enolase (429 aa).

Residue Q163 coordinates (2R)-2-phosphoglycerate. E205 functions as the Proton donor in the catalytic mechanism. 3 residues coordinate Mg(2+): D242, E287, and D314. (2R)-2-phosphoglycerate is bound by residues K339, R368, S369, and K390. K339 (proton acceptor) is an active-site residue.

The protein belongs to the enolase family. Mg(2+) is required as a cofactor.

The protein resides in the cytoplasm. Its subcellular location is the secreted. It is found in the cell surface. The enzyme catalyses (2R)-2-phosphoglycerate = phosphoenolpyruvate + H2O. It functions in the pathway carbohydrate degradation; glycolysis; pyruvate from D-glyceraldehyde 3-phosphate: step 4/5. Functionally, catalyzes the reversible conversion of 2-phosphoglycerate (2-PG) into phosphoenolpyruvate (PEP). It is essential for the degradation of carbohydrates via glycolysis. The protein is Enolase of Magnetococcus marinus (strain ATCC BAA-1437 / JCM 17883 / MC-1).